The sequence spans 190 residues: Biphenyl-2,3-diol 1,2-dioxygenase 3 (190 aa).

The region spanning 6–125 (RLAHFVLQTN…DGNMVELQID (120 aa)) is the VOC domain. Fe cation contacts are provided by His-9, His-73, and Glu-121.

Belongs to the extradiol ring-cleavage dioxygenase family. In terms of assembly, homohexamer. It depends on Fe(2+) as a cofactor.

It carries out the reaction biphenyl-2,3-diol + O2 = 2-hydroxy-6-oxo-6-phenylhexa-2,4-dienoate + H(+). The protein operates within xenobiotic degradation; biphenyl degradation; 2-hydroxy-2,4-pentadienoate and benzoate from biphenyl: step 3/4. This chain is Biphenyl-2,3-diol 1,2-dioxygenase 3 (bphC3), found in Rhodococcus globerulus.